We begin with the raw amino-acid sequence, 122 residues long: MGVSRACFVVMVVVYMVVAATPNVKLAEALTCGQVTGALAPCLGYLRTAGSVPVPLTCCNGVRGLNNAARTTIDRRTACNCLKQTANAIADLNLNAAAGLPAKCGVNIPYKISPSTDCNRVV.

A signal peptide spans 1-19 (MGVSRACFVVMVVVYMVVA). Residues 20–29 (ATPNVKLAEA) constitute a propeptide that is removed on maturation. Cystine bridges form between cysteine 32-cysteine 81, cysteine 42-cysteine 58, cysteine 59-cysteine 104, and cysteine 79-cysteine 118.

Monomer.

Plant non-specific lipid-transfer proteins transfer phospholipids as well as galactolipids across membranes. May play a role in wax or cutin deposition in the cell walls of expanding epidermal cells and certain secretory tissues. Binds saturated fatty acids, unsaturated fatty acids, lysolipids and, with highest efficiency, jasmonic acid. Has weak antimicrobial activity against fungi. Inhibits spore germination and hyphae elongation in A.niger VKM F-2259 and N.crassa VKM F-184. Has no antibacterial activity against A.tumefaciens A281, C.michiganensis VKM Ac-144 and P.syringae VKM B-1546. This Anethum graveolens (Dill) protein is Non-specific lipid-transfer protein.